A 152-amino-acid chain; its full sequence is Transcriptional regulator MraZ (152 aa).

SpoVT-AbrB domains follow at residues 5 to 52 (ASAI…PADE) and 81 to 124 (AHEI…DEAQ).

This sequence belongs to the MraZ family. Forms oligomers.

The protein resides in the cytoplasm. The protein localises to the nucleoid. This chain is Transcriptional regulator MraZ, found in Shewanella amazonensis (strain ATCC BAA-1098 / SB2B).